The primary structure comprises 347 residues: Uroporphyrinogen decarboxylase (347 aa).

Residues 36 to 40, Asp86, Tyr160, Ser212, and His326 each bind substrate; that span reads RQAGR.

This sequence belongs to the uroporphyrinogen decarboxylase family. In terms of assembly, homodimer.

The protein localises to the cytoplasm. The catalysed reaction is uroporphyrinogen III + 4 H(+) = coproporphyrinogen III + 4 CO2. Its pathway is porphyrin-containing compound metabolism; protoporphyrin-IX biosynthesis; coproporphyrinogen-III from 5-aminolevulinate: step 4/4. In terms of biological role, catalyzes the decarboxylation of four acetate groups of uroporphyrinogen-III to yield coproporphyrinogen-III. This Wolbachia sp. subsp. Brugia malayi (strain TRS) protein is Uroporphyrinogen decarboxylase.